A 239-amino-acid polypeptide reads, in one-letter code: MLEIGFCTLEDQCPYLKDKRSRIEYNYIENCPKEINNELIKRGWRRFGRYFSRPICKDCDECLSLRILVNEYNFSRSERRVVNKNINTKVILRTPNLSNEHLFLYDKYHRFMEEKKNWKRYDLSFKQYYNLYVDGFMNFGYELAFYIEDKLVCVDLIDILEDGISSIYCFYDPDFSYFSLGKFSLLNEIQIAKKMNLDYIYLGYFVKKCQSLSYKADYTPNEILKGTKELFENEVLWEK.

The protein belongs to the R-transferase family. Bpt subfamily.

It localises to the cytoplasm. It carries out the reaction N-terminal L-glutamyl-[protein] + L-leucyl-tRNA(Leu) = N-terminal L-leucyl-L-glutamyl-[protein] + tRNA(Leu) + H(+). It catalyses the reaction N-terminal L-aspartyl-[protein] + L-leucyl-tRNA(Leu) = N-terminal L-leucyl-L-aspartyl-[protein] + tRNA(Leu) + H(+). Functionally, functions in the N-end rule pathway of protein degradation where it conjugates Leu from its aminoacyl-tRNA to the N-termini of proteins containing an N-terminal aspartate or glutamate. The chain is Aspartate/glutamate leucyltransferase from Campylobacter jejuni (strain RM1221).